A 619-amino-acid polypeptide reads, in one-letter code: Thiohydroximate-O-sulfate sulfur/sulfate-lyase (nitrile-forming) NSP4 (619 aa).

Jacalin-type lectin domains lie at 2 to 142 and 151 to 292; these read AQKV…YFAP and AKKL…YISL. Kelch repeat units follow at residues 326–374, 379–425, 429–478, 480–524, and 528–583; these read KIYS…VCMV, TLYV…SMAA, NVYV…VVQG, VWVV…ASAA, and HIVI…GWTA. Arginine 386 acts as the Proton donor in catalysis. A (Z)-N-(sulfonatooxy)alkanimidothioate is bound by residues arginine 386, serine 419, arginine 441, glycine 470, and valine 519. Catalysis depends on arginine 441, which acts as the Proton donor. 3 residues coordinate Fe(2+): glutamate 535, aspartate 539, and histidine 543. Tryptophan 581 lines the a (Z)-N-(sulfonatooxy)alkanimidothioate pocket.

It belongs to the jacalin lectin family. The cofactor is Fe(2+). As to expression, mainly expressed in roots, and, to a lower extent, in seedlings and leaves. Observed in seeds.

The enzyme catalyses a (Z)-N-(sulfonatooxy)alkanimidothioate = a nitrile + sulfur + sulfate. The catalysed reaction is (Z)-phenyl-N-(sulfonatooxy)methanimidothioate = phenylacetonitrile + sulfur + sulfate. It carries out the reaction (Z)-N-(sulfonatooxy)prop-2-enimidothioate = but-3-enenitrile + sulfur + sulfate. Functionally, specifier protein that contributes to constitutive and herbivore-induced simple nitrile formation. Promotes simple nitriles, but not epithionitrile or thiocyanate formation. Converts allylglucosinolate and benzylglucosinolate (glucotropaeolin) to their corresponding simple nitriles in the presence of myrosinase. The polypeptide is Thiohydroximate-O-sulfate sulfur/sulfate-lyase (nitrile-forming) NSP4 (Arabidopsis thaliana (Mouse-ear cress)).